The chain runs to 358 residues: Peptide chain release factor 1 (358 aa).

Gln233 bears the N5-methylglutamine mark.

This sequence belongs to the prokaryotic/mitochondrial release factor family. Post-translationally, methylated by PrmC. Methylation increases the termination efficiency of RF1.

It localises to the cytoplasm. Functionally, peptide chain release factor 1 directs the termination of translation in response to the peptide chain termination codons UAG and UAA. This chain is Peptide chain release factor 1, found in Listeria monocytogenes serovar 1/2a (strain ATCC BAA-679 / EGD-e).